The primary structure comprises 486 residues: UDP-N-acetylmuramoyl-L-alanyl-D-glutamate--2,6-diaminopimelate ligase (486 aa).

Serine 34 lines the UDP-N-acetyl-alpha-D-muramoyl-L-alanyl-D-glutamate pocket. Residue 112–118 (GTAGKTS) participates in ATP binding. UDP-N-acetyl-alpha-D-muramoyl-L-alanyl-D-glutamate-binding positions include 154–155 (TT), serine 181, glutamine 187, and arginine 189. N6-carboxylysine is present on lysine 221. Residues arginine 385, 409–412 (DNPR), glycine 457, and glutamate 461 contribute to the meso-2,6-diaminopimelate site. A Meso-diaminopimelate recognition motif motif is present at residues 409–412 (DNPR).

This sequence belongs to the MurCDEF family. MurE subfamily. It depends on Mg(2+) as a cofactor. Carboxylation is probably crucial for Mg(2+) binding and, consequently, for the gamma-phosphate positioning of ATP.

The protein localises to the cytoplasm. The catalysed reaction is UDP-N-acetyl-alpha-D-muramoyl-L-alanyl-D-glutamate + meso-2,6-diaminopimelate + ATP = UDP-N-acetyl-alpha-D-muramoyl-L-alanyl-gamma-D-glutamyl-meso-2,6-diaminopimelate + ADP + phosphate + H(+). It functions in the pathway cell wall biogenesis; peptidoglycan biosynthesis. In terms of biological role, catalyzes the addition of meso-diaminopimelic acid to the nucleotide precursor UDP-N-acetylmuramoyl-L-alanyl-D-glutamate (UMAG) in the biosynthesis of bacterial cell-wall peptidoglycan. The chain is UDP-N-acetylmuramoyl-L-alanyl-D-glutamate--2,6-diaminopimelate ligase from Rhizobium meliloti (strain 1021) (Ensifer meliloti).